Reading from the N-terminus, the 284-residue chain is MDAIKKKMQAMKIEKENALDKSEQLENKLKEIEDVKVKIEEDLTSLQKKYTNQENEYDKVNEQFNESTVKLEASEKRVTECEDEIKGFTRRIQLLEDELERTQQKAEEAVLKLEEASKAADESERGRKVLESRSIADDDRIDKLEKDVKDSKYLAEEADRKYDEAARKLAITEVDLERAETRLEAAESKITELSEELQVVGNNCKALQNAVDQASQREDSYEETIRDLTQRLKDAENRAAEAERVVNKLQKEVDRLEDELLQEKEKYKQISDELDQTFAELAGM.

The stretch at 1–280 (MDAIKKKMQA…SDELDQTFAE (280 aa)) forms a coiled coil.

It belongs to the tropomyosin family. Homodimer.

Its function is as follows. Tropomyosin, in association with the troponin complex, plays a central role in the calcium dependent regulation of muscle contraction. This Sinonovacula constricta (Razor clam) protein is Tropomyosin.